Consider the following 613-residue polypeptide: Dihydroxy-acid dehydratase (613 aa).

Position 81 (aspartate 81) interacts with Mg(2+). Residue cysteine 122 coordinates [2Fe-2S] cluster. Positions 123 and 124 each coordinate Mg(2+). Residue lysine 124 is modified to N6-carboxylysine. Residue cysteine 193 participates in [2Fe-2S] cluster binding. A Mg(2+)-binding site is contributed by glutamate 489. Serine 515 functions as the Proton acceptor in the catalytic mechanism.

The protein belongs to the IlvD/Edd family. In terms of assembly, homodimer. Requires [2Fe-2S] cluster as cofactor. It depends on Mg(2+) as a cofactor.

The enzyme catalyses (2R)-2,3-dihydroxy-3-methylbutanoate = 3-methyl-2-oxobutanoate + H2O. It catalyses the reaction (2R,3R)-2,3-dihydroxy-3-methylpentanoate = (S)-3-methyl-2-oxopentanoate + H2O. It participates in amino-acid biosynthesis; L-isoleucine biosynthesis; L-isoleucine from 2-oxobutanoate: step 3/4. Its pathway is amino-acid biosynthesis; L-valine biosynthesis; L-valine from pyruvate: step 3/4. Functionally, functions in the biosynthesis of branched-chain amino acids. Catalyzes the dehydration of (2R,3R)-2,3-dihydroxy-3-methylpentanoate (2,3-dihydroxy-3-methylvalerate) into 2-oxo-3-methylpentanoate (2-oxo-3-methylvalerate) and of (2R)-2,3-dihydroxy-3-methylbutanoate (2,3-dihydroxyisovalerate) into 2-oxo-3-methylbutanoate (2-oxoisovalerate), the penultimate precursor to L-isoleucine and L-valine, respectively. The sequence is that of Dihydroxy-acid dehydratase from Pseudomonas putida (strain W619).